Consider the following 77-residue polypeptide: DNA-directed RNA polymerase subunit omega (77 aa).

This sequence belongs to the RNA polymerase subunit omega family. In cyanobacteria the RNAP catalytic core is composed of 2 alpha, 1 beta, 1 beta', 1 gamma and 1 omega subunit. When a sigma factor is associated with the core the holoenzyme is formed, which can initiate transcription.

The catalysed reaction is RNA(n) + a ribonucleoside 5'-triphosphate = RNA(n+1) + diphosphate. In terms of biological role, promotes RNA polymerase assembly. Latches the N- and C-terminal regions of the beta' subunit thereby facilitating its interaction with the beta and alpha subunits. This chain is DNA-directed RNA polymerase subunit omega, found in Thermosynechococcus vestitus (strain NIES-2133 / IAM M-273 / BP-1).